Here is a 326-residue protein sequence, read N- to C-terminus: Amino acid--[acyl-carrier-protein] ligase 1 (326 aa).

C131 serves as a coordination point for Zn(2+). ATP contacts are provided by residues R159, E161, and R168–L169. E176 is a Zn(2+) binding site. E176 contacts an L-alpha-amino acid. ATP is bound by residues K235 and A250 to S253. Position 279 (C279) interacts with Zn(2+). Position 286 (R286) interacts with ATP.

This sequence belongs to the class-II aminoacyl-tRNA synthetase family. Amino acid--[acyl-carrier-protein] ligase subfamily. In terms of assembly, homodimer. The cofactor is Zn(2+).

It catalyses the reaction an L-alpha-amino acid + holo-[ACP] + ATP = an L-alpha-aminoacyl-[ACP] + AMP + diphosphate. Functionally, catalyzes the ATP-dependent activation of L-glycine and its transfer to the phosphopantetheine prosthetic group covalently attached to the vicinal carrier protein bsr0959 of yet unknown function. May participate in nonribosomal peptide synthesis or related processes. L-alanine is a poor substrate whereas L-serine or D-amino acids are not substrates for ATP-dependent activation. Does not display tRNA aminoacylation activity. The protein is Amino acid--[acyl-carrier-protein] ligase 1 of Bradyrhizobium diazoefficiens (strain JCM 10833 / BCRC 13528 / IAM 13628 / NBRC 14792 / USDA 110).